A 624-amino-acid chain; its full sequence is Chaperone protein DnaK (624 aa).

Thr-174 is subject to Phosphothreonine; by autocatalysis. Disordered stretches follow at residues Ile-470–Val-504 and Asn-577–Lys-624. Over residues Glu-481 to Val-504 the composition is skewed to basic and acidic residues. Over residues Asn-577–Asp-605 the composition is skewed to low complexity. Residues Gly-615–Lys-624 are compositionally biased toward basic and acidic residues.

It belongs to the heat shock protein 70 family.

Its function is as follows. Acts as a chaperone. The polypeptide is Chaperone protein DnaK (Lactobacillus johnsonii (strain CNCM I-12250 / La1 / NCC 533)).